A 226-amino-acid polypeptide reads, in one-letter code: Cytidylate kinase (226 aa).

An ATP-binding site is contributed by 10 to 18; that stretch reads GPASSGKST.

It belongs to the cytidylate kinase family. Type 1 subfamily.

It is found in the cytoplasm. It catalyses the reaction CMP + ATP = CDP + ADP. The enzyme catalyses dCMP + ATP = dCDP + ADP. The chain is Cytidylate kinase from Streptococcus equi subsp. zooepidemicus (strain MGCS10565).